A 115-amino-acid polypeptide reads, in one-letter code: Large ribosomal subunit protein bL21 (115 aa).

Belongs to the bacterial ribosomal protein bL21 family. In terms of assembly, part of the 50S ribosomal subunit. Contacts protein L20.

In terms of biological role, this protein binds to 23S rRNA in the presence of protein L20. The chain is Large ribosomal subunit protein bL21 from Coxiella burnetii (strain RSA 331 / Henzerling II).